The primary structure comprises 737 residues: MPGKLLWGDIMELEAPLEESESQKKERQKSDRRKSRHHYDSDEKSETRENGVTDDLDAPKAKKSKMKEKLNGDTEEGFNRLSDEFSKSHKSRRKDLPNGDIDEYEKKSKRVSSLDTSTHKSSDNKLEETLTREQKEGAFSNFPISEETIKLLKGRGVTYLFPIQVKTFGPVYEGKDLIAQARTGTGKTFSFAIPLIERLQRNQETIKKSRSPKVLVLAPTRELANQVAKDFKDITRKLSVACFYGGTSYQSQINHIRNGIDILVGTPGRIKDHLQSGRLDLSKLRHVVLDEVDQMLDLGFAEQVEDIIHESYKTDSEDNPQTLLFSATCPQWVYKVAKKYMKSRYEQVDLVGKMTQKAATTVEHLAIQCHWSQRPAVIGDVLQVYSGSEGRAIIFCETKKNVTEMAMNPHIKQNAQCLHGDIAQSQREITLKGFREGSFKVLVATNVAARGLDIPEVDLVIQSSPPQDVESYIHRSGRTGRAGRTGICICFYQPRERGQLRYVEQKAGITFKRVGVPSTMDLVKSKSMDAIRSLASVSYAAVDFFRPSAQRLIEEKGAVDALAAALAHISGASSFEPRSLITSDKGFVTMTLESLEEIQDVSCAWKELNRKLSSNAVSQITRMCLLKGNMGVCFDVPTTESERLQAEWHDSDWILSVPAKLPEIEEYYDGNTSSNSRQRSGWSSGRSGRSGRSGGRSGGRSGRQSRQGSRSGSRQDGRRRSGNRNRSRSGGHKRSFD.

Positions 1–131 are disordered; sequence MPGKLLWGDI…SDNKLEETLT (131 aa). Residues 11–20 are compositionally biased toward acidic residues; sequence MELEAPLEES. Basic and acidic residues-rich tracts occupy residues 38-51, 67-87, and 117-131; these read HYDS…RENG, KEKL…EFSK, and STHK…ETLT. Serine 41, serine 82, serine 86, serine 121, and serine 122 each carry phosphoserine. A Glycyl lysine isopeptide (Lys-Gly) (interchain with G-Cter in SUMO2) cross-link involves residue lysine 125. The Q motif motif lies at 137-165; sequence GAFSNFPISEETIKLLKGRGVTYLFPIQV. One can recognise a Helicase ATP-binding domain in the interval 168–347; that stretch reads FGPVYEGKDL…KKYMKSRYEQ (180 aa). 181–188 serves as a coordination point for ATP; it reads ARTGTGKT. A Phosphothreonine modification is found at threonine 247. The DEVD box motif lies at 290 to 293; sequence DEVD. The Helicase C-terminal domain occupies 380–524; sequence DVLQVYSGSE…GVPSTMDLVK (145 aa). Serine 518 carries the post-translational modification Phosphoserine. Residues 668–737 are disordered; that stretch reads YDGNTSSNSR…RSGGHKRSFD (70 aa). Residues 673 to 687 show a composition bias toward low complexity; sequence SSNSRQRSGWSSGRS. Residues 691–701 show a composition bias toward gly residues; the sequence is GRSGGRSGGRS. Residues 702–712 show a composition bias toward low complexity; that stretch reads GRQSRQGSRSG. Residues 720-737 are compositionally biased toward basic residues; that stretch reads RSGNRNRSRSGGHKRSFD.

It belongs to the DEAD box helicase family. DDX21/DDX50 subfamily. As to quaternary structure, interacts with C1QBP. Interacts with the ubiquitin ligase CTLH complex through GID4. Interacts with TICAM1. As to expression, highest expression in skeletal muscle, liver, heart, placenta, and kidney.

Its subcellular location is the nucleus. It localises to the nucleolus. It is found in the cytoplasm. It carries out the reaction ATP + H2O = ADP + phosphate + H(+). Its function is as follows. ATP-dependent RNA helicase that may play a role in various aspects of RNA metabolism including pre-mRNA splicing or ribosomal RNA production. Also acts as a viral restriction factor and promotes the activation of the NF-kappa-B and IRF3 signaling pathways following its stimulation with viral RNA or infection with RNA and DNA viruses. For instance, decreases vaccinia virus, herpes simplex virus, Zika virus or dengue virus replication during the early stage of infection. Mechanistically, acts via the adapter TICAM1 and independently of the DDX1-DDX21-DHX36 helicase complex to induce the production of interferon-beta. The sequence is that of ATP-dependent RNA helicase DDX50 (DDX50) from Homo sapiens (Human).